A 111-amino-acid chain; its full sequence is Ribonuclease P protein component (111 aa).

It belongs to the RnpA family. In terms of assembly, consists of a catalytic RNA component (M1 or rnpB) and a protein subunit.

The enzyme catalyses Endonucleolytic cleavage of RNA, removing 5'-extranucleotides from tRNA precursor.. Its function is as follows. RNaseP catalyzes the removal of the 5'-leader sequence from pre-tRNA to produce the mature 5'-terminus. It can also cleave other RNA substrates such as 4.5S RNA. The protein component plays an auxiliary but essential role in vivo by binding to the 5'-leader sequence and broadening the substrate specificity of the ribozyme. The sequence is that of Ribonuclease P protein component from Clostridium botulinum (strain Okra / Type B1).